We begin with the raw amino-acid sequence, 406 residues long: NIPA-like protein 3 (406 aa).

The next 4 helical transmembrane spans lie at 33–53 (NLIG…ALNL), 76–96 (WWLG…SYAF), 101–121 (LIVP…IIFI), and 135–155 (VLSF…VTFA). Asn-166 is a glycosylation site (N-linked (GlcNAc...) asparagine). 5 helical membrane-spanning segments follow: residues 171–191 (LVSW…CLLL), 202–222 (IVVI…TVKA), 240–260 (PIFY…AAFL), 271–291 (LIAS…GAIF), and 300–320 (VLHI…VFLI). A Phosphoserine modification is found at Ser-372.

This sequence belongs to the NIPA family.

The protein resides in the membrane. The chain is NIPA-like protein 3 (NIPAL3) from Homo sapiens (Human).